Consider the following 750-residue polypeptide: Putative tyrosine-protein kinase EpsB (750 aa).

Over 1 to 31 (MTQNLPQPPAVNAPENELDLVRYLDVLVANR) the chain is Cytoplasmic. Residues 32 to 52 (WLIAGIAAAVMLLGAAYAFLA) form a helical membrane-spanning segment. The Periplasmic portion of the chain corresponds to 53-444 (RPVYEADIMV…VPEEPVKPKK (392 aa)). A helical transmembrane segment spans residues 445-465 (LTVTPLAGVLGVVLGVMAAFV). Over 466 to 750 (RNALFGGITD…NSKPPEAESA (285 aa)) the chain is Cytoplasmic.

The protein belongs to the etk/wzc family.

The protein localises to the cell inner membrane. The enzyme catalyses L-tyrosyl-[protein] + ATP = O-phospho-L-tyrosyl-[protein] + ADP + H(+). Its function is as follows. Probably involved in polymerization and/or export of exopolysaccharide EPS I which functions as a virulence factor. May be involved in an ATP-dependent process in the pathway for EPS I production, possibly export of the trimeric repeat units across the inner membrane or their polymerization. This Ralstonia solanacearum (Pseudomonas solanacearum) protein is Putative tyrosine-protein kinase EpsB (epsB).